The sequence spans 137 residues: Large-conductance mechanosensitive channel (137 aa).

The next 3 helical transmembrane spans lie at 15–35 (VDLA…NSIV), 38–58 (IIMP…MFIQ), and 80–100 (GNFV…FLVV).

This sequence belongs to the MscL family. In terms of assembly, homopentamer.

The protein resides in the cell inner membrane. In terms of biological role, channel that opens in response to stretch forces in the membrane lipid bilayer. May participate in the regulation of osmotic pressure changes within the cell. The protein is Large-conductance mechanosensitive channel of Brucella anthropi (strain ATCC 49188 / DSM 6882 / CCUG 24695 / JCM 21032 / LMG 3331 / NBRC 15819 / NCTC 12168 / Alc 37) (Ochrobactrum anthropi).